Consider the following 367-residue polypeptide: tRNA/tmRNA (uracil-C(5))-methyltransferase (367 aa).

5 residues coordinate S-adenosyl-L-methionine: Q190, Y218, N223, E239, and D299. C324 (nucleophile) is an active-site residue. The Proton acceptor role is filled by E358.

The protein belongs to the class I-like SAM-binding methyltransferase superfamily. RNA M5U methyltransferase family. TrmA subfamily.

It catalyses the reaction uridine(54) in tRNA + S-adenosyl-L-methionine = 5-methyluridine(54) in tRNA + S-adenosyl-L-homocysteine + H(+). The enzyme catalyses uridine(341) in tmRNA + S-adenosyl-L-methionine = 5-methyluridine(341) in tmRNA + S-adenosyl-L-homocysteine + H(+). Dual-specificity methyltransferase that catalyzes the formation of 5-methyluridine at position 54 (m5U54) in all tRNAs, and that of position 341 (m5U341) in tmRNA (transfer-mRNA). This chain is tRNA/tmRNA (uracil-C(5))-methyltransferase, found in Pectobacterium atrosepticum (strain SCRI 1043 / ATCC BAA-672) (Erwinia carotovora subsp. atroseptica).